A 508-amino-acid polypeptide reads, in one-letter code: MVTIQADEISNIIRERIEQYNREVKIVNTGTVLQVGDGIARIHGLDEVMAGELVEFEEGTIGIALNLESTNVGVVLMGDGLLIQEGSSVKATGRIAQIPVSEAYLGRVINALAKPIDGRGEISSSEYRLIESPAPGIISRRSVYEPLQTGLIAIDSMIPIGRGQRELIIGDRQTGKTAVATDTILNQQGKNVICVYVAIGQKASSVAQVVTNFQERGAMEYTIVVAETADSPATLQYLAPYTGAALAEYFMYRERHTSIIYDDPSKQAQAYRQMSLLLRRPPGREAYPGDVFYLHSRLLERAAKLSSLLGEGSMTALPIVETQSGDVSAYIPTNVISITDGQIFLSADLFNAGIRPAINVGISVSRVGSAAQIKAMKQVAGKLKLELAQFAELEAFAQFASDLDKATQNQLARGQRLRELLKQSQSAPLGVEEQVLTIYTGTNGYLDSLEIGQVRKFLVELRTYLKTNKPQFQEIISSTKTFTEEAEAILKEAIKEQRERFILQEQAA.

Gly170–Thr177 provides a ligand contact to ATP.

This sequence belongs to the ATPase alpha/beta chains family. As to quaternary structure, F-type ATPases have 2 components, CF(1) - the catalytic core - and CF(0) - the membrane proton channel. CF(1) has five subunits: alpha(3), beta(3), gamma(1), delta(1), epsilon(1). CF(0) has four main subunits: a, b, b' and c.

It is found in the plastid. The protein resides in the chloroplast thylakoid membrane. It catalyses the reaction ATP + H2O + 4 H(+)(in) = ADP + phosphate + 5 H(+)(out). Its function is as follows. Produces ATP from ADP in the presence of a proton gradient across the membrane. The alpha chain is a regulatory subunit. The polypeptide is ATP synthase subunit alpha, chloroplastic (Lactuca sativa (Garden lettuce)).